The following is a 211-amino-acid chain: Bacteriorhodopsin (211 aa).

A helical transmembrane segment spans residues 1–19 (IWLWLGTAGMFLGMLYFIA). At 20-33 (RGWGETDSRRQKFY) the chain is on the cytoplasmic side. The helical transmembrane segment at 34–52 (IATILITAIAFVNYLAMAL) threads the bilayer. Topologically, residues 53–68 (GFGLTIVEFAGEEHPI) are extracellular. The helical transmembrane segment at 69 to 86 (YWARYSDWLFTTPLLLYD) threads the bilayer. The Cytoplasmic segment spans residues 87 to 97 (LGLLAGADRNT). A helical membrane pass occupies residues 98–117 (ITSLVSLDVLMIGTGLVATL). Residues 118 to 130 (SAGSGVLSAGAER) lie on the Extracellular side of the membrane. Residues 131-150 (LVWWGISTAFLLVLLYFLFS) traverse the membrane as a helical segment. Residues 151-168 (SLSGRVADLPSDTRSTFK) are Cytoplasmic-facing. A helical transmembrane segment spans residues 169 to 187 (TLRNLVTVVWLVYPVWWLI). Topologically, residues 188-199 (GTEGIGLVGIGI) are extracellular. A helical transmembrane segment spans residues 200–211 (ETAGFMVIDLTA).

Belongs to the archaeal/bacterial/fungal opsin family.

The protein localises to the cell membrane. Its function is as follows. Light-driven proton pump. The chain is Bacteriorhodopsin (bop) from Halobacterium halobium (strain port).